A 449-amino-acid polypeptide reads, in one-letter code: Transport protein ComB (449 aa).

At 1–20 the chain is on the cytoplasmic side; the sequence is MKPEFLESAEFYNRRYHNFS. Residues 21–41 form a helical membrane-spanning segment; that stretch reads SSVIVPMALLLVFLLGFATVA. Topologically, residues 42–449 are extracellular; it reads EKEMSLSTRA…YYLDQFLNKE (408 aa).

Belongs to the membrane fusion protein (MFP) (TC 8.A.1) family.

Its subcellular location is the cell membrane. In terms of biological role, required for induction of competence. This chain is Transport protein ComB (comB), found in Streptococcus pneumoniae (strain ATCC BAA-255 / R6).